Consider the following 346-residue polypeptide: Aspartate-semialdehyde dehydrogenase (346 aa).

NADP(+)-binding positions include 10-13 (TGQG) and 38-39 (RS). A phosphate-binding site is contributed by Arg-98. Catalysis depends on Cys-131, which acts as the Acyl-thioester intermediate. Gln-158 is a substrate binding site. 161 to 162 (SG) is a binding site for NADP(+). Residue Lys-228 participates in phosphate binding. Arg-250 contributes to the substrate binding site. The active-site Proton acceptor is His-257. Asn-326 is an NADP(+) binding site.

It belongs to the aspartate-semialdehyde dehydrogenase family. In terms of assembly, homodimer.

The enzyme catalyses L-aspartate 4-semialdehyde + phosphate + NADP(+) = 4-phospho-L-aspartate + NADPH + H(+). Its pathway is amino-acid biosynthesis; L-lysine biosynthesis via DAP pathway; (S)-tetrahydrodipicolinate from L-aspartate: step 2/4. The protein operates within amino-acid biosynthesis; L-methionine biosynthesis via de novo pathway; L-homoserine from L-aspartate: step 2/3. It functions in the pathway amino-acid biosynthesis; L-threonine biosynthesis; L-threonine from L-aspartate: step 2/5. Catalyzes the NADPH-dependent formation of L-aspartate-semialdehyde (L-ASA) by the reductive dephosphorylation of L-aspartyl-4-phosphate. This chain is Aspartate-semialdehyde dehydrogenase, found in Mycolicibacterium smegmatis (Mycobacterium smegmatis).